The chain runs to 201 residues: Large ribosomal subunit protein uL4 (201 aa).

The disordered stretch occupies residues 45–66 (AQLTRSEVSGGGKKPWRQKGTG).

This sequence belongs to the universal ribosomal protein uL4 family. As to quaternary structure, part of the 50S ribosomal subunit.

In terms of biological role, one of the primary rRNA binding proteins, this protein initially binds near the 5'-end of the 23S rRNA. It is important during the early stages of 50S assembly. It makes multiple contacts with different domains of the 23S rRNA in the assembled 50S subunit and ribosome. Forms part of the polypeptide exit tunnel. The polypeptide is Large ribosomal subunit protein uL4 (Aeromonas hydrophila subsp. hydrophila (strain ATCC 7966 / DSM 30187 / BCRC 13018 / CCUG 14551 / JCM 1027 / KCTC 2358 / NCIMB 9240 / NCTC 8049)).